The chain runs to 46 residues: Cysteine-rich venom protein asurin-1 (46 aa).

Belongs to the CRISP family. Contains 8 disulfide bonds. In terms of tissue distribution, expressed by the venom gland.

The protein resides in the secreted. In terms of biological role, blocks contraction of smooth muscle elicited by high potassium-induced depolarization, but does not block caffeine-stimulated contraction. May target voltage-gated calcium channels on smooth muscle. This is Cysteine-rich venom protein asurin-1 from Austrelaps superbus (Lowland copperhead snake).